The primary structure comprises 443 residues: Tubulin beta-1/beta-2 chain (443 aa).

The GTP site is built by Q11, E69, S138, G142, T143, G144, N204, and N226. E69 contributes to the Mg(2+) binding site. The segment at 424–443 (QYQDASAEEEGEFEGEEEEA) is disordered. The span at 429-443 (SAEEEGEFEGEEEEA) shows a compositional bias: acidic residues.

The protein belongs to the tubulin family. In terms of assembly, dimer of alpha and beta chains. A typical microtubule is a hollow water-filled tube with an outer diameter of 25 nm and an inner diameter of 15 nM. Alpha-beta heterodimers associate head-to-tail to form protofilaments running lengthwise along the microtubule wall with the beta-tubulin subunit facing the microtubule plus end conferring a structural polarity. Microtubules usually have 13 protofilaments but different protofilament numbers can be found in some organisms and specialized cells. Requires Mg(2+) as cofactor.

The protein localises to the cytoplasm. It is found in the cytoskeleton. Functionally, tubulin is the major constituent of microtubules, a cylinder consisting of laterally associated linear protofilaments composed of alpha- and beta-tubulin heterodimers. Microtubules grow by the addition of GTP-tubulin dimers to the microtubule end, where a stabilizing cap forms. Below the cap, tubulin dimers are in GDP-bound state, owing to GTPase activity of alpha-tubulin. The polypeptide is Tubulin beta-1/beta-2 chain (TUBB1) (Chlamydomonas reinhardtii (Chlamydomonas smithii)).